The chain runs to 342 residues: DNA-directed RNA polymerase subunit alpha (342 aa).

The alpha N-terminal domain (alpha-NTD) stretch occupies residues M1 to D238. The interval F254–I342 is alpha C-terminal domain (alpha-CTD).

This sequence belongs to the RNA polymerase alpha chain family. In terms of assembly, homodimer. The RNAP catalytic core consists of 2 alpha, 1 beta, 1 beta' and 1 omega subunit. When a sigma factor is associated with the core the holoenzyme is formed, which can initiate transcription.

It catalyses the reaction RNA(n) + a ribonucleoside 5'-triphosphate = RNA(n+1) + diphosphate. Its function is as follows. DNA-dependent RNA polymerase catalyzes the transcription of DNA into RNA using the four ribonucleoside triphosphates as substrates. The polypeptide is DNA-directed RNA polymerase subunit alpha (Pelagibacter ubique (strain HTCC1062)).